The sequence spans 77 residues: Putative antitoxin VapB3 (77 aa).

Belongs to the UPF0330 family.

Possibly the antitoxin component of a type II toxin-antitoxin (TA) system. Its cognate toxin is VapC3 (Potential). This chain is Putative antitoxin VapB3 (vapB3), found in Methanocaldococcus jannaschii (strain ATCC 43067 / DSM 2661 / JAL-1 / JCM 10045 / NBRC 100440) (Methanococcus jannaschii).